A 332-amino-acid polypeptide reads, in one-letter code: Aerobic cobaltochelatase subunit CobS (332 aa).

In terms of assembly, heterotrimer of CobN, CobS and CobT.

The protein resides in the cytoplasm. The catalysed reaction is hydrogenobyrinate a,c-diamide + Co(2+) + ATP + H2O = cob(II)yrinate a,c diamide + ADP + phosphate + 5 H(+). The protein operates within cofactor biosynthesis; adenosylcobalamin biosynthesis; cob(II)yrinate a,c-diamide from precorrin-2 (aerobic route): step 10/10. In terms of biological role, catalyzes cobalt insertion in the corrin ring. This is Aerobic cobaltochelatase subunit CobS (cobS) from Sinorhizobium sp.